Reading from the N-terminus, the 62-residue chain is Photosystem II reaction center protein Z (62 aa).

2 helical membrane passes run 8 to 28 (TLFA…VVFA) and 41 to 61 (FSGI…NSFV).

Belongs to the PsbZ family. In terms of assembly, PSII is composed of 1 copy each of membrane proteins PsbA, PsbB, PsbC, PsbD, PsbE, PsbF, PsbH, PsbI, PsbJ, PsbK, PsbL, PsbM, PsbT, PsbY, PsbZ, Psb30/Ycf12, at least 3 peripheral proteins of the oxygen-evolving complex and a large number of cofactors. It forms dimeric complexes.

It localises to the plastid. The protein resides in the chloroplast thylakoid membrane. May control the interaction of photosystem II (PSII) cores with the light-harvesting antenna, regulates electron flow through the 2 photosystem reaction centers. PSII is a light-driven water plastoquinone oxidoreductase, using light energy to abstract electrons from H(2)O, generating a proton gradient subsequently used for ATP formation. The protein is Photosystem II reaction center protein Z of Tupiella akineta (Green alga).